Here is a 205-residue protein sequence, read N- to C-terminus: Holliday junction branch migration complex subunit RuvA (205 aa).

Positions 1–64 (MIGRLRGIVL…EDAQLLYGFN (64 aa)) are domain I. A domain II region spans residues 65 to 143 (DKQERALFRE…GLNGDLFNQS (79 aa)). A flexible linker region spans residues 144-156 (SDINLPATAKQTT). Residues 157–205 (SDADSEAEAAAALVSLGYKPQEASRMVSKIAKPGADCETLIREALRAVL) are domain III.

The protein belongs to the RuvA family. In terms of assembly, homotetramer. Forms an RuvA(8)-RuvB(12)-Holliday junction (HJ) complex. HJ DNA is sandwiched between 2 RuvA tetramers; dsDNA enters through RuvA and exits via RuvB. An RuvB hexamer assembles on each DNA strand where it exits the tetramer. Each RuvB hexamer is contacted by two RuvA subunits (via domain III) on 2 adjacent RuvB subunits; this complex drives branch migration. In the full resolvosome a probable DNA-RuvA(4)-RuvB(12)-RuvC(2) complex forms which resolves the HJ.

It localises to the cytoplasm. Its function is as follows. The RuvA-RuvB-RuvC complex processes Holliday junction (HJ) DNA during genetic recombination and DNA repair, while the RuvA-RuvB complex plays an important role in the rescue of blocked DNA replication forks via replication fork reversal (RFR). RuvA specifically binds to HJ cruciform DNA, conferring on it an open structure. The RuvB hexamer acts as an ATP-dependent pump, pulling dsDNA into and through the RuvAB complex. HJ branch migration allows RuvC to scan DNA until it finds its consensus sequence, where it cleaves and resolves the cruciform DNA. The polypeptide is Holliday junction branch migration complex subunit RuvA (Photorhabdus laumondii subsp. laumondii (strain DSM 15139 / CIP 105565 / TT01) (Photorhabdus luminescens subsp. laumondii)).